The following is a 312-amino-acid chain: Methionyl-tRNA formyltransferase (312 aa).

109 to 112 lines the (6S)-5,6,7,8-tetrahydrofolate pocket; sequence SLLP.

It belongs to the Fmt family.

The catalysed reaction is L-methionyl-tRNA(fMet) + (6R)-10-formyltetrahydrofolate = N-formyl-L-methionyl-tRNA(fMet) + (6S)-5,6,7,8-tetrahydrofolate + H(+). In terms of biological role, attaches a formyl group to the free amino group of methionyl-tRNA(fMet). The formyl group appears to play a dual role in the initiator identity of N-formylmethionyl-tRNA by promoting its recognition by IF2 and preventing the misappropriation of this tRNA by the elongation apparatus. The protein is Methionyl-tRNA formyltransferase of Listeria monocytogenes serovar 1/2a (strain ATCC BAA-679 / EGD-e).